Reading from the N-terminus, the 673-residue chain is Xyloglucan glycosyltransferase 4 (673 aa).

The next 2 membrane-spanning stretches (helical) occupy residues 90 to 110 (FIKACLVISIIALSIEIVAHF) and 144 to 164 (IAPLVISLSRFCTVLFLIQSL). Asp-238 is an active-site residue. Positions 297 and 299 each coordinate substrate. Asp-391 is a catalytic residue. Helical transmembrane passes span 469–489 (LILPFYSFTLFCIILPLTMFI) and 494–514 (LPLWIICYVPIFISLLNILPS). Ser-581 carries the phosphoserine modification. The next 2 helical transmembrane spans lie at 623-643 (VFKKELGLAFLLLTAAARSFL) and 648-668 (LHFYFLLFQGLSFLVVGLDLI).

It belongs to the glycosyltransferase 2 family. Plant cellulose synthase-like C subfamily. Homodimer. Interacts with XXT5. Interacts with FUT1, MUR3 and XLT2. In terms of tissue distribution, expressed in seedlings, roots, leaves, stems, flowers and seeds.

The protein localises to the golgi apparatus membrane. Beta-1,4-glucan synthase rather involved in the synthesis of the xyloglucan backbone than cellulose. Seems to work simultaneously with xyloglucan 6-xylosyltransferase. Xyloglucan is a noncellulosic polysaccharides of plant cell wall and consists of a glucan backbone substituted by xylose, galactose and fucose. Associates with other xyloglucan-synthesizing enzymes to form multiprotein complexes for xyloglucan synthesis in the Golgi. The sequence is that of Xyloglucan glycosyltransferase 4 from Arabidopsis thaliana (Mouse-ear cress).